The primary structure comprises 478 residues: Lipoprotein lipase (478 aa).

The N-terminal stretch at 1–27 (MESKVLLLLALSVWLQSLTVSRGGLVA) is a signal peptide. Residues 35–56 (KDFRDIESKFALRTPEDTAEDT) form an interaction with GPIHBP1 region. Cys-57 and Cys-70 are joined by a disulfide. Asn-73 carries an N-linked (GlcNAc...) asparagine glycan. Tyr-124 carries the 3'-nitrotyrosine modification. Ser-162 serves as the catalytic Nucleophile. Asp-186 functions as the Charge relay system in the catalytic mechanism. Tyr-194 carries the post-translational modification 3'-nitrotyrosine. Positions 197, 200, 202, and 205 each coordinate Ca(2+). Cys-246 and Cys-269 are disulfide-bonded. Residues 246-269 (CNIGEALRVIAERGLGDVDQLVKC) form an essential for determining substrate specificity region. Catalysis depends on His-271, which acts as the Charge relay system. 2 disulfides stabilise this stretch: Cys-294-Cys-313 and Cys-305-Cys-308. Residues 344–467 (FHYQVKIHFS…KGKSPVIFVK (124 aa)) enclose the PLAT domain. A 3'-nitrotyrosine modification is found at Tyr-346. Asn-389 carries N-linked (GlcNAc...) asparagine glycosylation. Residues 420-424 (WSNWW) form an important for interaction with lipoprotein particles region. Residues 433-437 (KIRVK) are important for heparin binding. An interaction with GPIHBP1 region spans residues 446–470 (IFCSREKMSYLQKGKSPVIFVKCHD). Cys-448 and Cys-468 are disulfide-bonded.

Belongs to the AB hydrolase superfamily. Lipase family. In terms of assembly, homodimer. Interacts with GPIHBP1 with 1:1 stoichiometry. Interacts with APOC2; the interaction activates LPL activity in the presence of lipids. Interaction with heparan sulfate proteoglycans is required to protect LPL against loss of activity. Associates with lipoprotein particles in blood plasma. Interacts with LMF1 and SEL1L; interaction with SEL1L is required to prevent aggregation of newly synthesized LPL in the endoplasmic reticulum (ER), and for normal export of LPL from the ER to the extracellular space. Interacts with SORL1; SORL1 acts as a sorting receptor, promoting LPL localization to endosomes and later to lysosomes, leading to degradation of newly synthesized LPL. Post-translationally, tyrosine nitration after lipopolysaccharide (LPS) challenge down-regulates the lipase activity.

The protein localises to the cell membrane. It localises to the secreted. The protein resides in the extracellular space. It is found in the extracellular matrix. The catalysed reaction is a triacylglycerol + H2O = a diacylglycerol + a fatty acid + H(+). It carries out the reaction a 1,2-diacyl-sn-glycero-3-phosphocholine + H2O = a 2-acyl-sn-glycero-3-phosphocholine + a fatty acid + H(+). It catalyses the reaction 1,2,3-tri-(9Z-octadecenoyl)-glycerol + H2O = di-(9Z)-octadecenoylglycerol + (9Z)-octadecenoate + H(+). The enzyme catalyses 1,2-di-(9Z-octadecenoyl)-sn-glycero-3-phosphocholine + H2O = (9Z-octadecenoyl)-sn-glycero-3-phosphocholine + (9Z)-octadecenoate + H(+). The catalysed reaction is 1,2,3-tributanoylglycerol + H2O = dibutanoylglycerol + butanoate + H(+). It carries out the reaction 1,2-dihexadecanoyl-sn-glycero-3-phosphocholine + H2O = hexadecanoyl-sn-glycero-3-phosphocholine + hexadecanoate + H(+). With respect to regulation, the apolipoprotein APOC2 acts as a coactivator of LPL activity. Ca(2+) binding promotes protein stability and formation of the active homodimer. Interaction with GPIHBP1 protects LPL against inactivation by ANGPTL4. Its function is as follows. Key enzyme in triglyceride metabolism. Catalyzes the hydrolysis of triglycerides from circulating chylomicrons and very low density lipoproteins (VLDL), and thereby plays an important role in lipid clearance from the blood stream, lipid utilization and storage. Although it has both phospholipase and triglyceride lipase activities it is primarily a triglyceride lipase with low but detectable phospholipase activity. Mediates margination of triglyceride-rich lipoprotein particles in capillaries. Recruited to its site of action on the luminal surface of vascular endothelium by binding to GPIHBP1 and cell surface heparan sulfate proteoglycans. In Ovis aries (Sheep), this protein is Lipoprotein lipase (LPL).